Here is a 672-residue protein sequence, read N- to C-terminus: Peptidoglycan D,D-transpeptidase MrdA (672 aa).

Residues 21-41 (IFFAVGLVIICLLVLASRYAY) form a helical membrane-spanning segment. The active-site Acyl-ester intermediate is Ser-326. Residues Asp-350, Asp-365, His-371, and Cys-384 each contribute to the Zn(2+) site. The tract at residues 616–672 (ANHQVNGGLMTAGIKPGELPSGNESASSTPATSAPTSAAASTPQATPTRPATNEVDE) is disordered. A compositionally biased stretch (low complexity) spans 640 to 672 (SASSTPATSAPTSAAASTPQATPTRPATNEVDE).

Belongs to the transpeptidase family. MrdA subfamily. Monomer. The cofactor is Zn(2+).

The protein localises to the cell inner membrane. It carries out the reaction Preferential cleavage: (Ac)2-L-Lys-D-Ala-|-D-Ala. Also transpeptidation of peptidyl-alanyl moieties that are N-acyl substituents of D-alanine.. Its pathway is cell wall biogenesis; peptidoglycan biosynthesis. Its activity is regulated as follows. Inhibited by the beta-lactams sulbactam and piperacillin-tazobactam. In terms of biological role, catalyzes cross-linking of the peptidoglycan cell wall. Involved in the determination of the rod shape of the cell. This Acinetobacter baumannii (strain ATCC 19606 / DSM 30007 / JCM 6841 / CCUG 19606 / CIP 70.34 / NBRC 109757 / NCIMB 12457 / NCTC 12156 / 81) protein is Peptidoglycan D,D-transpeptidase MrdA.